The following is a 114-amino-acid chain: Transmembrane protein 14C (114 aa).

The next 4 membrane-spanning stretches (helical) occupy residues 8-28 (LMPL…GGII), 33-53 (AGSV…GLGA), 63-83 (VWVF…RFYN), and 89-109 (PAGL…ISLL).

It belongs to the TMEM14 family.

It is found in the mitochondrion membrane. Required for normal heme biosynthesis. This Mus musculus (Mouse) protein is Transmembrane protein 14C (Tmem14c).